A 2504-amino-acid chain; its full sequence is Fatty acid synthase (2504 aa).

Residue M1 is modified to N-acetylmethionine. The Ketosynthase family 3 (KS3) domain occupies 1 to 406 (MEEVVIAGMS…GSNVHVILQP (406 aa)). The residue at position 59 (K59) is an N6-acetyllysine. The residue at position 63 (S63) is a Phosphoserine. K70 carries the N6-acetyllysine modification. Catalysis depends on C161, which acts as the For beta-ketoacyl synthase activity. S207 is modified (phosphoserine). Residue H293 is the For beta-ketoacyl synthase activity of the active site. N6-acetyllysine is present on K298. H331 serves as the catalytic For beta-ketoacyl synthase activity. Positions 429–817 (RTLEAVQDLL…INVNPNALFP (389 aa)) are acyl and malonyl transferases. K528 carries the post-translational modification N6-acetyllysine. S581 functions as the For malonyltransferase activity in the catalytic mechanism. An acyl-CoA is bound by residues 647–648 (DT) and F671. K673 is subject to N6-acetyllysine. S725 bears the Phosphoserine mark. Position 773 (R773) interacts with an acyl-CoA. N6-acetyllysine is present on K790. Residues 844-967 (VPVAEDFPNG…VYLWEDPNSK (124 aa)) are N-terminal hotdog fold. The 261-residue stretch at 844–1104 (VPVAEDFPNG…ISRLQTTATS (261 aa)) folds into the PKS/mFAS DH domain. H878 serves as the catalytic Proton acceptor; for dehydratase activity. The segment at 982 to 1104 (SVSRLTQGEV…ISRLQTTATS (123 aa)) is C-terminal hotdog fold. K993 carries the post-translational modification N6-acetyllysine. D1032 serves as the catalytic Proton donor; for dehydratase activity. N6-acetyllysine occurs at positions 1071 and 1276. C1464 carries the S-nitrosocysteine modification. Phosphoserine occurs at positions 1577 and 1587. Positions 1628–1856 (DVPSSWTLEE…VQVREEEPEA (229 aa)) are enoyl reductase. 1664-1681 (VLIHSGSGGVGQAAISIA) is a binding site for NADP(+). K1697 is modified (N6-(pyridoxal phosphate)lysine; alternate). K1697 carries the N6-acetyllysine; alternate modification. An N6-acetyllysine mark is found at K1764 and K1840. The beta-ketoacyl reductase stretch occupies residues 1857-2111 (VLPGAQPTLI…FVLAEKKAVA (255 aa)). Residue 1879-1894 (SYIITGGLGGFGLELA) participates in NADP(+) binding. The residue at position 1988 (K1988) is an N6-acetyllysine. C2084 carries the post-translational modification S-nitrosocysteine. In terms of domain architecture, Carrier spans 2112–2192 (HGDGDTQRDL…EMSSKTDSAT (81 aa)). S2150 bears the O-(pantetheine 4'-phosphoryl)serine; alternate mark. At S2150 the chain carries Phosphoserine; alternate. Positions 2181–2205 (LQEMSSKTDSATDTTAPKSRSDTSL) are disordered. Residues 2185–2198 (SSKTDSATDTTAPK) show a composition bias toward low complexity. Phosphoserine occurs at positions 2190 and 2229. The segment at 2201-2504 (SDTSLKQNQL…AEPRVSVREG (304 aa)) is thioesterase. S2301 (for thioesterase activity) is an active-site residue. K2384 is modified (N6-acetyllysine). K2442 participates in a covalent cross-link: Glycyl lysine isopeptide (Lys-Gly) (interchain with G-Cter in SUMO2). Catalysis depends on H2474, which acts as the For thioesterase activity.

As to quaternary structure, homodimer which is arranged in a head to tail fashion. Interacts with CEACAM1; this interaction is insulin and phosphorylation-dependent; reduces fatty-acid synthase activity. Post-translationally, S-nitrosylation of Fatty acid synthase at cysteine residues Cys-1464 or Cys-2084 is important for the enzyme dimerization. In adipocytes, S-nitrosylation of Fatty acid synthase occurs under physiological conditions and gradually increases during adipogenesis.

It localises to the cytoplasm. It is found in the melanosome. It catalyses the reaction acetyl-CoA + n malonyl-CoA + 2n NADPH + 2n H(+) = a long-chain fatty acid + (n+1) CoA + n CO2 + 2n NADP(+).. It carries out the reaction holo-[ACP] + acetyl-CoA = acetyl-[ACP] + CoA. The catalysed reaction is holo-[ACP] + malonyl-CoA = malonyl-[ACP] + CoA. The enzyme catalyses a fatty acyl-[ACP] + malonyl-[ACP] + H(+) = a 3-oxoacyl-[ACP] + holo-[ACP] + CO2. It catalyses the reaction a (3R)-hydroxyacyl-[ACP] + NADP(+) = a 3-oxoacyl-[ACP] + NADPH + H(+). It carries out the reaction a (3R)-hydroxyacyl-[ACP] = a (2E)-enoyl-[ACP] + H2O. The catalysed reaction is a 2,3-saturated acyl-[ACP] + NADP(+) = a (2E)-enoyl-[ACP] + NADPH + H(+). The enzyme catalyses hexadecanoyl-[ACP] + H2O = hexadecanoate + holo-[ACP] + H(+). It catalyses the reaction acetyl-[ACP] + malonyl-[ACP] + H(+) = 3-oxobutanoyl-[ACP] + holo-[ACP] + CO2. It carries out the reaction 3-oxobutanoyl-[ACP] + NADPH + H(+) = (3R)-hydroxybutanoyl-[ACP] + NADP(+). The catalysed reaction is (3R)-hydroxybutanoyl-[ACP] = (2E)-butenoyl-[ACP] + H2O. The enzyme catalyses (2E)-butenoyl-[ACP] + NADPH + H(+) = butanoyl-[ACP] + NADP(+). It catalyses the reaction butanoyl-[ACP] + malonyl-[ACP] + H(+) = 3-oxohexanoyl-[ACP] + holo-[ACP] + CO2. It carries out the reaction 3-oxohexanoyl-[ACP] + NADPH + H(+) = (3R)-hydroxyhexanoyl-[ACP] + NADP(+). The catalysed reaction is (3R)-hydroxyhexanoyl-[ACP] = (2E)-hexenoyl-[ACP] + H2O. The enzyme catalyses (2E)-hexenoyl-[ACP] + NADPH + H(+) = hexanoyl-[ACP] + NADP(+). It catalyses the reaction hexanoyl-[ACP] + malonyl-[ACP] + H(+) = 3-oxooctanoyl-[ACP] + holo-[ACP] + CO2. It carries out the reaction 3-oxooctanoyl-[ACP] + NADPH + H(+) = (3R)-hydroxyoctanoyl-[ACP] + NADP(+). The catalysed reaction is (3R)-hydroxyoctanoyl-[ACP] = (2E)-octenoyl-[ACP] + H2O. The enzyme catalyses (2E)-octenoyl-[ACP] + NADPH + H(+) = octanoyl-[ACP] + NADP(+). It catalyses the reaction octanoyl-[ACP] + malonyl-[ACP] + H(+) = 3-oxodecanoyl-[ACP] + holo-[ACP] + CO2. It carries out the reaction 3-oxodecanoyl-[ACP] + NADPH + H(+) = (3R)-hydroxydecanoyl-[ACP] + NADP(+). The catalysed reaction is (3R)-hydroxydecanoyl-[ACP] = (2E)-decenoyl-[ACP] + H2O. The enzyme catalyses (2E)-decenoyl-[ACP] + NADPH + H(+) = decanoyl-[ACP] + NADP(+). It catalyses the reaction decanoyl-[ACP] + malonyl-[ACP] + H(+) = 3-oxododecanoyl-[ACP] + holo-[ACP] + CO2. It carries out the reaction 3-oxododecanoyl-[ACP] + NADPH + H(+) = (3R)-hydroxydodecanoyl-[ACP] + NADP(+). The catalysed reaction is (3R)-hydroxydodecanoyl-[ACP] = (2E)-dodecenoyl-[ACP] + H2O. The enzyme catalyses (2E)-dodecenoyl-[ACP] + NADPH + H(+) = dodecanoyl-[ACP] + NADP(+). It catalyses the reaction dodecanoyl-[ACP] + malonyl-[ACP] + H(+) = 3-oxotetradecanoyl-[ACP] + holo-[ACP] + CO2. It carries out the reaction 3-oxotetradecanoyl-[ACP] + NADPH + H(+) = (3R)-hydroxytetradecanoyl-[ACP] + NADP(+). The catalysed reaction is (3R)-hydroxytetradecanoyl-[ACP] = (2E)-tetradecenoyl-[ACP] + H2O. The enzyme catalyses (2E)-tetradecenoyl-[ACP] + NADPH + H(+) = tetradecanoyl-[ACP] + NADP(+). It catalyses the reaction tetradecanoyl-[ACP] + malonyl-[ACP] + H(+) = 3-oxohexadecanoyl-[ACP] + holo-[ACP] + CO2. It carries out the reaction 3-oxohexadecanoyl-[ACP] + NADPH + H(+) = (3R)-hydroxyhexadecanoyl-[ACP] + NADP(+). The catalysed reaction is (3R)-hydroxyhexadecanoyl-[ACP] = (2E)-hexadecenoyl-[ACP] + H2O. The enzyme catalyses (2E)-hexadecenoyl-[ACP] + NADPH + H(+) = hexadecanoyl-[ACP] + NADP(+). It catalyses the reaction hexadecanoyl-[ACP] + malonyl-[ACP] + H(+) = 3-oxooctadecanoyl-[ACP] + holo-[ACP] + CO2. It carries out the reaction 3-oxooctadecanoyl-[ACP] + NADPH + H(+) = (3R)-hydroxyoctadecanoyl-[ACP] + NADP(+). The catalysed reaction is (3R)-hydroxyoctadecanoyl-[ACP] = (2E)-octadecenoyl-[ACP] + H2O. The enzyme catalyses (2E)-octadecenoyl-[ACP] + NADPH + H(+) = octadecanoyl-[ACP] + NADP(+). It catalyses the reaction tetradecanoyl-[ACP] + H2O = tetradecanoate + holo-[ACP] + H(+). It functions in the pathway lipid metabolism; fatty acid biosynthesis. Fatty acid synthetase is a multifunctional enzyme that catalyzes the de novo biosynthesis of long-chain saturated fatty acids starting from acetyl-CoA and malonyl-CoA in the presence of NADPH. This multifunctional protein contains 7 catalytic activities and a site for the binding of the prosthetic group 4'-phosphopantetheine of the acyl carrier protein ([ACP]) domain. The sequence is that of Fatty acid synthase (Fasn) from Mus musculus (Mouse).